Here is a 149-residue protein sequence, read N- to C-terminus: Transcription factor HY5-like (149 aa).

The tract at residues 1-77 (MSLQRPNGNS…RRRGRNPVDK (77 aa)) is disordered. Residues 23-36 (ESDEELLMVPDMEA) are interaction with COP1. Residue Ser-24 is modified to Phosphoserine. The segment covering 55–64 (ELDQTQNGVS) has biased composition (polar residues). A bZIP domain is found at 78–141 (EYRSLKRLLR…TMLRKMLINT (64 aa)). Positions 80-100 (RSLKRLLRNRVSAQQARERKK) are basic motif. Residues 106 to 134 (LESRANELQNNNDQLEEKISTLTNENTML) are leucine-zipper.

This sequence belongs to the bZIP family. Heterodimer; heterodimerizes with HY5 via the leucine-zipper domains. Interacts with COP1 WD40 domain. Interacts with BBX24/STO and BBX25/STH. Ubiquitinated by COP1. Ubiquitination takes place in darkness and leads to its subsequent degradation, thereby preventing the activation of photomorphogenesis signals.

It localises to the nucleus. Transcription factor that promotes photomorphogenesis in light. Acts downstream of the light receptor network and directly affects transcription of light-induced genes. Specifically involved in the blue light specific pathway, suggesting that it participates in transmission of cryptochromes (CRY1 and CRY2) signals to downstream responses. In darkness, its degradation prevents the activation of light-induced genes. The polypeptide is Transcription factor HY5-like (HYH) (Arabidopsis thaliana (Mouse-ear cress)).